The primary structure comprises 994 residues: Bifunctional glutamine synthetase adenylyltransferase/adenylyl-removing enzyme (994 aa).

Positions methionine 1–leucine 487 are adenylyl removase. The segment at glycine 492–serine 994 is adenylyl transferase.

It belongs to the GlnE family. Mg(2+) serves as cofactor.

The catalysed reaction is [glutamine synthetase]-O(4)-(5'-adenylyl)-L-tyrosine + phosphate = [glutamine synthetase]-L-tyrosine + ADP. The enzyme catalyses [glutamine synthetase]-L-tyrosine + ATP = [glutamine synthetase]-O(4)-(5'-adenylyl)-L-tyrosine + diphosphate. Its function is as follows. Involved in the regulation of glutamine synthetase GlnA, a key enzyme in the process to assimilate ammonia. When cellular nitrogen levels are high, the C-terminal adenylyl transferase (AT) inactivates GlnA by covalent transfer of an adenylyl group from ATP to specific tyrosine residue of GlnA, thus reducing its activity. Conversely, when nitrogen levels are low, the N-terminal adenylyl removase (AR) activates GlnA by removing the adenylyl group by phosphorolysis, increasing its activity. The regulatory region of GlnE binds the signal transduction protein PII (GlnB) which indicates the nitrogen status of the cell. In Mycobacterium bovis (strain ATCC BAA-935 / AF2122/97), this protein is Bifunctional glutamine synthetase adenylyltransferase/adenylyl-removing enzyme.